The sequence spans 592 residues: MDNRTTYCGLVTESYIGQEIILKGWVQKRRDLGGLIFIDLRDREGVVQIVFNPDFSKEALTIAETIRSEYVIEVHGKVTMRDEAVINPKIKTGKVEVQVSEVTIINKSETPPFQIEAETDSSEDVRLKYRYLDLRREPLANTFKMRHQITRAVRNYLDESGFYEVETPVLTKSTPEGARDYLVPSRVQEGEFYALPQSPQIFKQLLMIGGFDKYYQIVKCFRDEDLRADRQPEFTQIDIEMSFVDQEDVMSMNEGMLKRIMKDVKGIDIATPFPRMTYEEAMRDYGIDKPDTRFDMKLVTLNDLASKMEFKVFKGAVESGGAVKAIVVKGASDKYSRKDIDALQEYAKIYGAKGLAWVKVTEDGLNGPIAKFFEESHASELLDATNAEMGDLILFVADKWSVVNASLANLRNKLGKELGLIDENKYNFLWVTDWPLFEYDEELDRYFAAHHPFTAPKKEHVEMLKTDKEKVQANAYDVVLNGYELGGGSIRIHDQEMQKKMFEALGFSDEEAQEQFGFLMDAFKYGAPPHGGIALGLDRMVMLLSGRSNLRDVIAFPKTASATCLLTDAPSKVDDKQLEELHIQLNIENSEK.

An L-aspartate-binding site is contributed by E176. An aspartate region spans residues Q200 to K203. L-aspartate is bound at residue R222. ATP is bound by residues R222–E224 and Q231. L-aspartate is bound at residue H450. Position 484 (E484) interacts with ATP. R491 serves as a coordination point for L-aspartate. G536–R539 is a binding site for ATP.

The protein belongs to the class-II aminoacyl-tRNA synthetase family. Type 1 subfamily. As to quaternary structure, homodimer.

The protein resides in the cytoplasm. It catalyses the reaction tRNA(Asp) + L-aspartate + ATP = L-aspartyl-tRNA(Asp) + AMP + diphosphate. Functionally, catalyzes the attachment of L-aspartate to tRNA(Asp) in a two-step reaction: L-aspartate is first activated by ATP to form Asp-AMP and then transferred to the acceptor end of tRNA(Asp). This chain is Aspartate--tRNA ligase, found in Macrococcus caseolyticus (strain JCSC5402) (Macrococcoides caseolyticum).